The primary structure comprises 658 residues: UvrABC system protein B (658 aa).

Residues 25 to 416 (QFIHNGAQYS…QEHIAEQIIR (392 aa)) form the Helicase ATP-binding domain. 38 to 45 (GVTGSGKT) is a binding site for ATP. The short motif at 91–114 (HFDYYQPEAYIPRRDLFIEKDSSI) is the Beta-hairpin element. The Helicase C-terminal domain occupies 433 to 607 (AVLDLYDEIK…ELKIESSGLS (175 aa)). Residues 623–658 (ESIIKELNIKMHQAAKALEFEEAARLRDEIARIRTM) form the UVR domain.

This sequence belongs to the UvrB family. Forms a heterotetramer with UvrA during the search for lesions. Interacts with UvrC in an incision complex.

The protein resides in the cytoplasm. Its function is as follows. The UvrABC repair system catalyzes the recognition and processing of DNA lesions. A damage recognition complex composed of 2 UvrA and 2 UvrB subunits scans DNA for abnormalities. Upon binding of the UvrA(2)B(2) complex to a putative damaged site, the DNA wraps around one UvrB monomer. DNA wrap is dependent on ATP binding by UvrB and probably causes local melting of the DNA helix, facilitating insertion of UvrB beta-hairpin between the DNA strands. Then UvrB probes one DNA strand for the presence of a lesion. If a lesion is found the UvrA subunits dissociate and the UvrB-DNA preincision complex is formed. This complex is subsequently bound by UvrC and the second UvrB is released. If no lesion is found, the DNA wraps around the other UvrB subunit that will check the other stand for damage. In Helicobacter hepaticus (strain ATCC 51449 / 3B1), this protein is UvrABC system protein B.